The chain runs to 1503 residues: ABC multidrug transporter MDR3 (1503 aa).

The segment at 1–46 (MAPTEEANVTKPTGELRPDEKLNYEEDVKCSGSSSTTVGKTAYDTD) is disordered. N-linked (GlcNAc...) asparagine glycosylation is present at N8. A compositionally biased stretch (basic and acidic residues) spans 14–29 (GELRPDEKLNYEEDVK). One can recognise an ABC transporter 1 domain in the interval 153 to 408 (LKAWSGIMSM…FIEMGFDCPS (256 aa)). 2 N-linked (GlcNAc...) asparagine glycosylation sites follow: N332 and N463. 5 helical membrane-spanning segments follow: residues 519 to 539 (MTLT…SVFY), 554 to 574 (LLFF…LTLW), 599 to 619 (ILVD…IIYF), 628 to 648 (GHFF…SNVF), and 662 to 682 (LVPT…TIPV). N729 carries an N-linked (GlcNAc...) asparagine glycan. A helical transmembrane segment spans residues 771–791 (GIIVAFFLFFLFVYITATELV). Residues 816 to 838 (KKKQDPEAASTQEKQPVETSGHD) form a disordered region. Over residues 824–833 (ASTQEKQPVE) the composition is skewed to polar residues. The ABC transporter 2 domain occupies 850-1093 (FHWESVCYDI…LIEYFESKGA (244 aa)). Position 886–893 (886–893 (GVSGAGKT)) interacts with ATP. 6 helical membrane-spanning segments follow: residues 1186-1206 (YIYS…FTFY), 1222-1242 (IFMF…YFVI), 1259-1279 (WIAF…LLTV), 1310-1330 (LLIL…IAGI), 1346-1366 (LTLV…FWIF), and 1458-1478 (IGIL…LYWL). Residue N1499 is glycosylated (N-linked (GlcNAc...) asparagine).

This sequence belongs to the ABC transporter superfamily. ABCG family. PDR (TC 3.A.1.205) subfamily.

The protein resides in the cell membrane. It carries out the reaction itraconazole(in) + ATP + H2O = itraconazole(out) + ADP + phosphate + H(+). It catalyses the reaction voriconazole(in) + ATP + H2O = voriconazole(out) + ADP + phosphate + H(+). The catalysed reaction is fluconazole(in) + ATP + H2O = fluconazole(out) + ADP + phosphate + H(+). The enzyme catalyses (2R,4S)-ketoconazole(in) + ATP + H2O = (2R,4S)-ketoconazole(out) + ADP + phosphate + H(+). It carries out the reaction (2S,4R)-ketoconazole(in) + ATP + H2O = (2S,4R)-ketoconazole(out) + ADP + phosphate + H(+). It catalyses the reaction (R)-miconazole(in) + ATP + H2O = (R)-miconazole(out) + ADP + phosphate + H(+). The catalysed reaction is (S)-miconazole(in) + ATP + H2O = (S)-miconazole(out) + ADP + phosphate + H(+). Azole transport activity is inhibited by milbemycin oxime. In terms of biological role, pleiotropic ABC efflux transporter involved in the modulation susceptibility to azoles, including fluconazole, itraconazole, ketoconazole, miconazole and voriconazole. The chain is ABC multidrug transporter MDR3 from Trichophyton rubrum (strain ATCC MYA-4607 / CBS 118892) (Athlete's foot fungus).